The primary structure comprises 326 residues: Malate dehydrogenase (326 aa).

11-17 provides a ligand contact to NAD(+); the sequence is GAAGQIG. Positions 92 and 98 each coordinate substrate. Residues Asn-105, Gln-112, and 129–131 contribute to the NAD(+) site; that span reads VGN. Substrate-binding residues include Asn-131 and Arg-162. His-187 serves as the catalytic Proton acceptor.

The protein belongs to the LDH/MDH superfamily. MDH type 2 family.

It carries out the reaction (S)-malate + NAD(+) = oxaloacetate + NADH + H(+). Catalyzes the reversible oxidation of malate to oxaloacetate. This chain is Malate dehydrogenase, found in Leptospira interrogans serogroup Icterohaemorrhagiae serovar Lai (strain 56601).